We begin with the raw amino-acid sequence, 263 residues long: Tryptophan synthase alpha chain (263 aa).

Residues glutamate 49 and aspartate 60 each act as proton acceptor in the active site.

It belongs to the TrpA family. Tetramer of two alpha and two beta chains.

The enzyme catalyses (1S,2R)-1-C-(indol-3-yl)glycerol 3-phosphate + L-serine = D-glyceraldehyde 3-phosphate + L-tryptophan + H2O. The protein operates within amino-acid biosynthesis; L-tryptophan biosynthesis; L-tryptophan from chorismate: step 5/5. The alpha subunit is responsible for the aldol cleavage of indoleglycerol phosphate to indole and glyceraldehyde 3-phosphate. This chain is Tryptophan synthase alpha chain, found in Roseobacter denitrificans (strain ATCC 33942 / OCh 114) (Erythrobacter sp. (strain OCh 114)).